Reading from the N-terminus, the 498-residue chain is MDFSVKVDIEKEVTCPICLELLTEPLSLDCGHSFCQACITAKIKESVIISRGESSCPVCQTRFQPGNLRPNRHLANIVERVKEVKMSPQEGQKRDVCEHHGKKLQIFCKEDGKVICWVCELSQEHQGHQTFRINEVVKECQEKLQVALQRLIKEDQEAEKLEDDIRQERTAWKNYIQIERQKILKGFNEMRVILDNEEQRELQKLEEGEVNVLDNLAAATDQLVQQRQDASTLISDLQRRLRGSSVEMLQDVIDVMKRSESWTLKKPKSVSKKLKSVFRVPDLSGMLQVLKELTDVQYYWVDVMLNPGSATSNVAISVDQRQVKTVRTCTFKNSNPCDFSAFGVFGCQYFSSGKYYWEVDVSGKIAWILGVHSKISSLNKRKSSGFAFDPSVNYSKVYSRYRPQYGYWVIGLQNTCEYNAFEDSSSSDPKVLTLFMAVPPCRIGVFLDYEAGIVSFFNVTNHGALIYKFSGCRFSRPAYPYFNPWNCLVPMTVCPPSS.

The RING-type zinc-finger motif lies at 15-60 (CPICLELLTEPLSLDCGHSFCQACITAKIKESVIISRGESSCPVCQ). The segment at 92 to 133 (QKRDVCEHHGKKLQIFCKEDGKVICWVCELSQEHQGHQTFRI) adopts a B box-type zinc-finger fold. Zn(2+) contacts are provided by C97, H100, C119, and H125. A coiled-coil region spans residues 132-248 (RINEVVKECQ…RRLRGSSVEM (117 aa)). The short motif at 257–275 (KRSESWTLKKPKSVSKKLK) is the Nuclear localization signal element. The 216-residue stretch at 283 to 498 (LSGMLQVLKE…VPMTVCPPSS (216 aa)) folds into the B30.2/SPRY domain.

It belongs to the TRIM/RBCC family. Homotrimer. As to quaternary structure, (Microbial infection) Interacts with HIV-1 Gag polyprotein; this interaction seems to reduce gag production or virus budding. In terms of assembly, (Microbial infection) Interacts with EMCV protease 3C; this interaction leads to viral protease ubiquitination. Post-translationally, auto-ubiquitinated. Strongly expressed in peripheral blood leukocytes, spleen, thymus, and ovary. Expressed at basal levels in other tissues.

It is found in the cytoplasm. The protein localises to the nucleus. The protein resides in the nucleus speckle. It localises to the cajal body. The catalysed reaction is S-ubiquitinyl-[E2 ubiquitin-conjugating enzyme]-L-cysteine + [acceptor protein]-L-lysine = [E2 ubiquitin-conjugating enzyme]-L-cysteine + N(6)-ubiquitinyl-[acceptor protein]-L-lysine.. It functions in the pathway protein modification; protein ubiquitination. Functionally, interferon-induced E3 ubiquitin ligase that plays important roles in innate and adaptive immunity. Restricts the replication of many viruses including HIV-1, encephalomyocarditis virus (EMCV), hepatitis B virus (HBV), hepatitis C virus (HCV) or Zika virus (ZIKV). Mechanistically, negatively regulates HCV replication by promoting ubiquitination and subsequent degradation of viral NS5A. Also acts by promoting the degradation of Zika virus NS1 and NS3 proteins through proteasomal degradation. Acts as a suppressor of basal HIV-1 LTR-driven transcription by preventing Sp1 binding to the HIV-1 promoter. Also plays a role in antiviral immunity by co-regulating together with NT5C2 the RIGI/NF-kappa-B pathway by promoting 'Lys-63'-linked ubiquitination of RIGI, while NT5C2 is responsible for 'Lys-48'-linked ubiquitination of RIGI. Participates in adaptive immunity by suppressing the amount of MHC class II protein in a negative feedback manner in order to limit the extent of MHC class II induction. The polypeptide is E3 ubiquitin-protein ligase TRIM22 (TRIM22) (Homo sapiens (Human)).